The following is an 832-amino-acid chain: Cadherin-like protein 26 (832 aa).

A signal peptide spans 1–27 (MAMRSGRHPSLLLLLVLLLWLLQVSII). At 28-614 (DSVQQETDDL…ELADAEVGLH (587 aa)) the chain is on the extracellular side. 4 Cadherin domains span residues 35 to 165 (DDLT…APQF), 166 to 275 (PEKE…RPAF), 276 to 396 (TQEN…PPAF), and 397 to 500 (HPQS…VPTL). N-linked (GlcNAc...) asparagine glycans are attached at residues asparagine 81, asparagine 85, asparagine 171, and asparagine 177. Asparagine 462 is a glycosylation site (N-linked (GlcNAc...) asparagine). Residues 615 to 635 (VGALFPVCAAFVALAVALLFL) form a helical membrane-spanning segment. At 636-832 (LRCYFVLEPK…EIYSESGVPS (197 aa)) the chain is on the cytoplasmic side. The interval 813–832 (SLGSKATPFEEIYSESGVPS) is disordered.

Homodimer. Component of a cadherin:catenin adhesion complex composed of at least of CDH26, beta-catenin/CTNNB1, alpha-catenin/CTNNA1 and p120 catenin/CTNND1. Post-translationally, N-glycosylated. Expressed by epithelial cells of gastrointestinal tissue.

The protein localises to the cell membrane. In terms of biological role, cadherins are calcium-dependent cell adhesion proteins. They preferentially interact with themselves in a homophilic manner in connecting cells; cadherins may thus contribute to the sorting of heterogeneous cell types. Ligand for integrins alpha-E/beta-7, ITGAE:ITGAB7, alpha-4/beta-7, ITGA4:ITGAB7 and alpha-4/beta-1, ITGA4:ITGAB1 through which modulates CD4(+) T cells activation. This chain is Cadherin-like protein 26 (CDH26), found in Homo sapiens (Human).